A 321-amino-acid polypeptide reads, in one-letter code: Manganese-dependent ADP-ribose/CDP-alcohol diphosphatase (321 aa).

Zn(2+) is bound by residues D25, Q27, D72, N107, H226, H263, and H265.

It belongs to the ADPRibase-Mn family. As to quaternary structure, monomer. Mg(2+) serves as cofactor.

The enzyme catalyses CDP-choline + H2O = phosphocholine + CMP + 2 H(+). It carries out the reaction ADP-D-ribose + H2O = D-ribose 5-phosphate + AMP + 2 H(+). It catalyses the reaction CDP-glycerol + H2O = sn-glycerol 3-phosphate + CMP + 2 H(+). Hydrolyzes ADP-ribose, IDP-ribose, CDP-glycerol, CDP-choline and CDP-ethanolamine, but not other non-reducing ADP-sugars or CDP-glucose. In Oryza sativa subsp. japonica (Rice), this protein is Manganese-dependent ADP-ribose/CDP-alcohol diphosphatase.